The primary structure comprises 335 residues: Nucleoid-associated protein PC1_1634 (335 aa).

Belongs to the YejK family.

The protein resides in the cytoplasm. It is found in the nucleoid. The protein is Nucleoid-associated protein PC1_1634 of Pectobacterium carotovorum subsp. carotovorum (strain PC1).